A 664-amino-acid polypeptide reads, in one-letter code: Transketolase 1 (664 aa).

A substrate-binding site is contributed by H26. Residues H66 and 114–116 (GPL) each bind thiamine diphosphate. D155 contributes to the Mg(2+) binding site. Thiamine diphosphate is bound by residues G156 and N185. Mg(2+) contacts are provided by N185 and I187. Substrate contacts are provided by H260, R357, and S384. H260 serves as a coordination point for thiamine diphosphate. Residue E411 is the Proton donor of the active site. F437 contributes to the thiamine diphosphate binding site. Residues H461, D469, and R520 each contribute to the substrate site.

This sequence belongs to the transketolase family. Homodimer. It depends on Mg(2+) as a cofactor. Ca(2+) serves as cofactor. Mn(2+) is required as a cofactor. The cofactor is Co(2+). Requires thiamine diphosphate as cofactor.

The enzyme catalyses D-sedoheptulose 7-phosphate + D-glyceraldehyde 3-phosphate = aldehydo-D-ribose 5-phosphate + D-xylulose 5-phosphate. Its function is as follows. Catalyzes the transfer of a two-carbon ketol group from a ketose donor to an aldose acceptor, via a covalent intermediate with the cofactor thiamine pyrophosphate. The chain is Transketolase 1 (tkt1) from Aliivibrio fischeri (strain ATCC 700601 / ES114) (Vibrio fischeri).